Here is a 113-residue protein sequence, read N- to C-terminus: U11-theraphotoxin-Hhn1j (113 aa).

An N-terminal signal peptide occupies residues 1-21; that stretch reads MNTVRVTFLLVFVLAVSLGQA. A propeptide spanning residues 22-74 is cleaved from the precursor; that stretch reads DKDENRMEMQEKTEQGKSYLDFAENLLLQKLEELEAKLLEEDSEESRNSRQKR. Residues 60–69 are compositionally biased toward basic and acidic residues; sequence LEEDSEESRN. Residues 60–83 form a disordered region; sequence LEEDSEESRNSRQKRCIGEGVPCD. 3 cysteine pairs are disulfide-bonded: C75–C90, C82–C95, and C89–C110.

Belongs to the neurotoxin 14 (magi-1) family. 01 (HNTX-16) subfamily. In terms of tissue distribution, expressed by the venom gland.

The protein localises to the secreted. Probable ion channel inhibitor. The chain is U11-theraphotoxin-Hhn1j from Cyriopagopus hainanus (Chinese bird spider).